Here is a 74-residue protein sequence, read N- to C-terminus: UPF0346 protein SE_1114 (74 aa).

Belongs to the UPF0346 family.

In Staphylococcus epidermidis (strain ATCC 12228 / FDA PCI 1200), this protein is UPF0346 protein SE_1114.